Consider the following 317-residue polypeptide: 4-hydroxy-3-methylbut-2-enyl diphosphate reductase (317 aa).

Residue Cys12 coordinates [4Fe-4S] cluster. (2E)-4-hydroxy-3-methylbut-2-enyl diphosphate-binding residues include His41 and His74. Dimethylallyl diphosphate-binding residues include His41 and His74. Isopentenyl diphosphate contacts are provided by His41 and His74. Cys97 is a [4Fe-4S] cluster binding site. His125 contributes to the (2E)-4-hydroxy-3-methylbut-2-enyl diphosphate binding site. Position 125 (His125) interacts with dimethylallyl diphosphate. Position 125 (His125) interacts with isopentenyl diphosphate. The active-site Proton donor is Glu127. Residue Thr168 coordinates (2E)-4-hydroxy-3-methylbut-2-enyl diphosphate. Cys198 is a binding site for [4Fe-4S] cluster. Positions 226, 227, 228, and 270 each coordinate (2E)-4-hydroxy-3-methylbut-2-enyl diphosphate. 4 residues coordinate dimethylallyl diphosphate: Ser226, Ser227, Asn228, and Ser270. Positions 226, 227, 228, and 270 each coordinate isopentenyl diphosphate.

The protein belongs to the IspH family. As to quaternary structure, homodimer. The cofactor is [4Fe-4S] cluster.

The enzyme catalyses isopentenyl diphosphate + 2 oxidized [2Fe-2S]-[ferredoxin] + H2O = (2E)-4-hydroxy-3-methylbut-2-enyl diphosphate + 2 reduced [2Fe-2S]-[ferredoxin] + 2 H(+). It catalyses the reaction dimethylallyl diphosphate + 2 oxidized [2Fe-2S]-[ferredoxin] + H2O = (2E)-4-hydroxy-3-methylbut-2-enyl diphosphate + 2 reduced [2Fe-2S]-[ferredoxin] + 2 H(+). It functions in the pathway isoprenoid biosynthesis; dimethylallyl diphosphate biosynthesis; dimethylallyl diphosphate from (2E)-4-hydroxy-3-methylbutenyl diphosphate: step 1/1. The protein operates within isoprenoid biosynthesis; isopentenyl diphosphate biosynthesis via DXP pathway; isopentenyl diphosphate from 1-deoxy-D-xylulose 5-phosphate: step 6/6. Catalyzes the conversion of 1-hydroxy-2-methyl-2-(E)-butenyl 4-diphosphate (HMBPP) into a mixture of isopentenyl diphosphate (IPP) and dimethylallyl diphosphate (DMAPP). Acts in the terminal step of the DOXP/MEP pathway for isoprenoid precursor biosynthesis. This chain is 4-hydroxy-3-methylbut-2-enyl diphosphate reductase, found in Yersinia pseudotuberculosis serotype IB (strain PB1/+).